Here is a 316-residue protein sequence, read N- to C-terminus: Pantothenate kinase (316 aa).

Position 95–102 (95–102 (GSVAVGKS)) interacts with ATP.

Belongs to the prokaryotic pantothenate kinase family.

It localises to the cytoplasm. The enzyme catalyses (R)-pantothenate + ATP = (R)-4'-phosphopantothenate + ADP + H(+). The protein operates within cofactor biosynthesis; coenzyme A biosynthesis; CoA from (R)-pantothenate: step 1/5. The chain is Pantothenate kinase from Shewanella baltica (strain OS223).